We begin with the raw amino-acid sequence, 218 residues long: MSDVIKDLSELRLSYEQGELYETQVASNPHEQFLGWFNHALAANLHEPYAMSLATASASGRPHVRTVLLRGATEAGYDFYTNYDSQKGIDLAENPYAELLFYWPSLERQVRVGGHVVKIPEQESTDYYHKRPRDSQIAAHISTPQSGKIESRELLQQRFQDLQQQVQSREVLDKPEFWGGYRLQPDYYEFWQGRPNRLHDRLSYEKIDGQWTLHRLMP.

Substrate-binding positions include 12-15 and arginine 70; that span reads RLSY. Residues 65–70, 80–81, lysine 87, and glutamine 109 contribute to the FMN site; these read RTVLLR and YT. Substrate is bound by residues tyrosine 127, arginine 131, and serine 135. FMN-binding positions include 145–146 and tryptophan 191; that span reads QS. 197 to 199 is a binding site for substrate; that stretch reads RLH. Arginine 201 is a binding site for FMN.

It belongs to the pyridoxamine 5'-phosphate oxidase family. Homodimer. The cofactor is FMN.

It catalyses the reaction pyridoxamine 5'-phosphate + O2 + H2O = pyridoxal 5'-phosphate + H2O2 + NH4(+). It carries out the reaction pyridoxine 5'-phosphate + O2 = pyridoxal 5'-phosphate + H2O2. The protein operates within cofactor metabolism; pyridoxal 5'-phosphate salvage; pyridoxal 5'-phosphate from pyridoxamine 5'-phosphate: step 1/1. It participates in cofactor metabolism; pyridoxal 5'-phosphate salvage; pyridoxal 5'-phosphate from pyridoxine 5'-phosphate: step 1/1. Functionally, catalyzes the oxidation of either pyridoxine 5'-phosphate (PNP) or pyridoxamine 5'-phosphate (PMP) into pyridoxal 5'-phosphate (PLP). The protein is Pyridoxine/pyridoxamine 5'-phosphate oxidase of Acinetobacter baumannii (strain AB0057).